Here is a 215-residue protein sequence, read N- to C-terminus: Large ribosomal subunit protein uL3 (215 aa).

The tract at residues 136–155 is disordered; that stretch reads GVSISHRSHGSTGQRQDPGK. Gln-151 carries the N5-methylglutamine modification.

This sequence belongs to the universal ribosomal protein uL3 family. As to quaternary structure, part of the 50S ribosomal subunit. Forms a cluster with proteins L14 and L19. Methylated by PrmB.

Functionally, one of the primary rRNA binding proteins, it binds directly near the 3'-end of the 23S rRNA, where it nucleates assembly of the 50S subunit. The protein is Large ribosomal subunit protein uL3 of Rickettsia typhi (strain ATCC VR-144 / Wilmington).